A 277-amino-acid polypeptide reads, in one-letter code: Energy-coupling factor transporter ATP-binding protein EcfA1 (277 aa).

The 239-residue stretch at 5-243 folds into the ABC transporter domain; the sequence is IRAQNVSFCY…VEVLKKIGLD (239 aa). Position 42-49 (42-49) interacts with ATP; the sequence is GHNGSGKS.

This sequence belongs to the ABC transporter superfamily. Energy-coupling factor EcfA family. As to quaternary structure, forms a stable energy-coupling factor (ECF) transporter complex composed of 2 membrane-embedded substrate-binding proteins (S component), 2 ATP-binding proteins (A component) and 2 transmembrane proteins (T component).

The protein resides in the cell membrane. Its function is as follows. ATP-binding (A) component of a common energy-coupling factor (ECF) ABC-transporter complex. Unlike classic ABC transporters this ECF transporter provides the energy necessary to transport a number of different substrates. The protein is Energy-coupling factor transporter ATP-binding protein EcfA1 of Caldanaerobacter subterraneus subsp. tengcongensis (strain DSM 15242 / JCM 11007 / NBRC 100824 / MB4) (Thermoanaerobacter tengcongensis).